The primary structure comprises 472 residues: MVKLTMEPVTRIEGHAKITVHLDDAGNVEDTRLHVMEFRGFEKFLQGRPIEEAPRIVPRICGICDVQHHLAAAKAVDACFGFEPEDVLPAAYKMREIMNWGSYMHSHGLHFYFLAAPDFIAGKDRKTRNVFQIIKDAPDIALQAIELRKNALELVRATGGRPIHPTSSTPGGISTELDDETQKDLLKKAQRNVELAEATLELAVPIFEENIDLVNSLGNIETYHTGLVKDGVWDVYDGIVRIKDKEGNMFREFKPADYADTIAEHVKPYSWLKFPYIKDLGYPDGVYRVSPLSRLNVADKMPDAAPKAQEHFKEFRENFGYAQQTLLYHWARLIELLACAECAADALEGDLSGEKFPDSLERQAGDGVGIVEAPRGTLTHHYTCDENGLITKANIVVATIQNNPAMEMGIQKVAQDYIKPGVEVDDKIFNLMEMVIRAYDPCLSCATHTIDSQMRLATLEVYDSEGDLVKRI.

Residues Cys61, Cys64, Cys442, and Cys445 each coordinate Ni(2+).

It belongs to the [NiFe]/[NiFeSe] hydrogenase large subunit family. In terms of assembly, the F420-non-reducing hydrogenase is composed of three subunits; MvhA, MvhD and MvhG. It forms a complex with the heterodisulfide reductase (hdr). Ni(2+) is required as a cofactor.

Part of a complex that provides reducing equivalents for heterodisulfide reductase. The sequence is that of F420-non-reducing hydrogenase subunit A (mvhA) from Methanothermobacter thermautotrophicus (strain ATCC 29096 / DSM 1053 / JCM 10044 / NBRC 100330 / Delta H) (Methanobacterium thermoautotrophicum).